A 192-amino-acid chain; its full sequence is Glycerol-3-phosphate acyltransferase (192 aa).

Helical transmembrane passes span 4-24 (MFWLLATFAYLLGSLSFAILL), 54-74 (LAILTLLGDLCKGLLPILIAS), 80-100 (IAQQGWIGVCAVLGHLFPVYF), 112-132 (AGVLLGLYPPAAALAIAAWLL), and 154-174 (LLAWQEPHALLPMSVLTLLIV).

The protein belongs to the PlsY family. In terms of assembly, probably interacts with PlsX.

It is found in the cell inner membrane. It carries out the reaction an acyl phosphate + sn-glycerol 3-phosphate = a 1-acyl-sn-glycero-3-phosphate + phosphate. Its pathway is lipid metabolism; phospholipid metabolism. In terms of biological role, catalyzes the transfer of an acyl group from acyl-phosphate (acyl-PO(4)) to glycerol-3-phosphate (G3P) to form lysophosphatidic acid (LPA). This enzyme utilizes acyl-phosphate as fatty acyl donor, but not acyl-CoA or acyl-ACP. This is Glycerol-3-phosphate acyltransferase from Pseudomonas savastanoi pv. phaseolicola (strain 1448A / Race 6) (Pseudomonas syringae pv. phaseolicola (strain 1448A / Race 6)).